A 90-amino-acid polypeptide reads, in one-letter code: Small ribosomal subunit protein bS18B (90 aa).

It belongs to the bacterial ribosomal protein bS18 family. In terms of assembly, part of the 30S ribosomal subunit. Forms a tight heterodimer with protein bS6.

Functionally, binds as a heterodimer with protein bS6 to the central domain of the 16S rRNA, where it helps stabilize the platform of the 30S subunit. This chain is Small ribosomal subunit protein bS18B, found in Roseiflexus sp. (strain RS-1).